A 137-amino-acid polypeptide reads, in one-letter code: Small ribosomal subunit protein uS12 (137 aa).

Residues 1-20 (MPTTNQLVNRGRTSKVQKQN) are disordered. The residue at position 102 (D102) is a 3-methylthioaspartic acid.

Belongs to the universal ribosomal protein uS12 family. In terms of assembly, part of the 30S ribosomal subunit. Contacts proteins S8 and S17. May interact with IF1 in the 30S initiation complex.

With S4 and S5 plays an important role in translational accuracy. Functionally, interacts with and stabilizes bases of the 16S rRNA that are involved in tRNA selection in the A site and with the mRNA backbone. Located at the interface of the 30S and 50S subunits, it traverses the body of the 30S subunit contacting proteins on the other side and probably holding the rRNA structure together. The combined cluster of proteins S8, S12 and S17 appears to hold together the shoulder and platform of the 30S subunit. The protein is Small ribosomal subunit protein uS12 of Mycoplasmopsis synoviae (strain 53) (Mycoplasma synoviae).